The chain runs to 297 residues: Glycerol-3-phosphate dehydrogenase [NAD(P)+] (297 aa).

NADPH-binding residues include Trp-11, Arg-33, and Lys-79. The sn-glycerol 3-phosphate site is built by Lys-79, Gly-107, and Ser-109. Ala-111 contributes to the NADPH binding site. Lys-161, Asp-214, Ser-224, Arg-225, and Asn-226 together coordinate sn-glycerol 3-phosphate. Residue Lys-161 is the Proton acceptor of the active site. Arg-225 contributes to the NADPH binding site. NADPH is bound by residues Val-249 and Glu-251.

This sequence belongs to the NAD-dependent glycerol-3-phosphate dehydrogenase family.

Its subcellular location is the cytoplasm. The catalysed reaction is sn-glycerol 3-phosphate + NAD(+) = dihydroxyacetone phosphate + NADH + H(+). It carries out the reaction sn-glycerol 3-phosphate + NADP(+) = dihydroxyacetone phosphate + NADPH + H(+). It functions in the pathway membrane lipid metabolism; glycerophospholipid metabolism. In terms of biological role, catalyzes the reduction of the glycolytic intermediate dihydroxyacetone phosphate (DHAP) to sn-glycerol 3-phosphate (G3P), the key precursor for phospholipid synthesis. This chain is Glycerol-3-phosphate dehydrogenase [NAD(P)+], found in Campylobacter jejuni subsp. doylei (strain ATCC BAA-1458 / RM4099 / 269.97).